Reading from the N-terminus, the 280-residue chain is Thylakoid lumenal protein TL20.3, chloroplastic (280 aa).

A chloroplast-targeting transit peptide spans 1–59 (MAFSSLSPLPMKSLDISRSSSSVSRSPYHFQRYLLRRLQLSSRSNLEIKDSSNTREGCC). The transit peptide at 60-90 (SSAESNTWKRILSAAMAAAVIASSSGVPAMA) directs the protein to the thylakoid. 2 Pentapeptide repeat domains span residues 124–163 (ENFR…NFSG) and 169–208 (TLMD…DFSD).

As to quaternary structure, interacts with thioredoxin. Interacts in vitro with LTO1.

The protein resides in the plastid. The protein localises to the chloroplast thylakoid lumen. Pentapeptide repeat protein of unknown function. Subject to degradation when reduced. The sequence is that of Thylakoid lumenal protein TL20.3, chloroplastic from Arabidopsis thaliana (Mouse-ear cress).